Reading from the N-terminus, the 141-residue chain is Large ribosomal subunit protein uL16 (141 aa).

This sequence belongs to the universal ribosomal protein uL16 family. Part of the 50S ribosomal subunit.

Binds 23S rRNA and is also seen to make contacts with the A and possibly P site tRNAs. In Hydrogenobaculum sp. (strain Y04AAS1), this protein is Large ribosomal subunit protein uL16.